Here is a 129-residue protein sequence, read N- to C-terminus: Small ribosomal subunit protein uS11 (129 aa).

This sequence belongs to the universal ribosomal protein uS11 family. In terms of assembly, part of the 30S ribosomal subunit. Interacts with proteins S7 and S18. Binds to IF-3.

Located on the platform of the 30S subunit, it bridges several disparate RNA helices of the 16S rRNA. Forms part of the Shine-Dalgarno cleft in the 70S ribosome. In Levilactobacillus brevis (strain ATCC 367 / BCRC 12310 / CIP 105137 / JCM 1170 / LMG 11437 / NCIMB 947 / NCTC 947) (Lactobacillus brevis), this protein is Small ribosomal subunit protein uS11.